Here is a 503-residue protein sequence, read N- to C-terminus: Pentatricopeptide repeat-containing protein At2g30100, chloroplastic (503 aa).

The N-terminal 50 residues, 1–50 (MAYAHVFASLTISTISLRRFLPRLHRNHSVKPNSRIICNLKLNYSAGKFR), are a transit peptide targeting the chloroplast. PPR repeat units lie at residues 341–375 (IGVV…GREP), 376–410 (EADL…GSQR), and 411–445 (KKKT…GLHP).

Belongs to the PPR family. P subfamily.

It localises to the plastid. The protein resides in the chloroplast. This chain is Pentatricopeptide repeat-containing protein At2g30100, chloroplastic, found in Arabidopsis thaliana (Mouse-ear cress).